The primary structure comprises 245 residues: Alanyl-tRNA editing protein AlaX-M (245 aa).

Zn(2+) contacts are provided by His107, His111, Cys210, and His214.

It belongs to the class-II aminoacyl-tRNA synthetase family. Editing domain AlaX-M subfamily. Zn(2+) is required as a cofactor.

It is found in the cytoplasm. In terms of biological role, functions in trans to edit the amino acid moiety from mischarged charged tRNA(Ala). The sequence is that of Alanyl-tRNA editing protein AlaX-M (alaXM) from Methanosarcina acetivorans (strain ATCC 35395 / DSM 2834 / JCM 12185 / C2A).